The primary structure comprises 379 residues: Alanine racemase (379 aa).

The Proton acceptor; specific for D-alanine role is filled by K35. At K35 the chain carries N6-(pyridoxal phosphate)lysine. R133 serves as a coordination point for substrate. The active-site Proton acceptor; specific for L-alanine is Y265. M312 is a binding site for substrate.

It belongs to the alanine racemase family. Pyridoxal 5'-phosphate serves as cofactor.

It catalyses the reaction L-alanine = D-alanine. Its pathway is amino-acid biosynthesis; D-alanine biosynthesis; D-alanine from L-alanine: step 1/1. Catalyzes the interconversion of L-alanine and D-alanine. May also act on other amino acids. In Treponema denticola (strain ATCC 35405 / DSM 14222 / CIP 103919 / JCM 8153 / KCTC 15104), this protein is Alanine racemase (alr).